A 242-amino-acid polypeptide reads, in one-letter code: Uroporphyrinogen-III C-methyltransferase (242 aa).

S-adenosyl-L-homocysteine-binding positions include proline 12, 88-90 (GGD), 118-119 (TS), and methionine 170.

It belongs to the precorrin methyltransferase family. As to quaternary structure, homodimer.

It catalyses the reaction uroporphyrinogen III + 2 S-adenosyl-L-methionine = precorrin-2 + 2 S-adenosyl-L-homocysteine + H(+). It functions in the pathway cofactor biosynthesis; adenosylcobalamin biosynthesis; precorrin-2 from uroporphyrinogen III: step 1/1. Its function is as follows. Catalyzes the two successive C-2 and C-7 methylation reactions involved in the conversion of uroporphyrinogen III to precorrin-2 via the intermediate formation of precorrin-1. It is a step in the biosynthesis of both cobalamin (vitamin B12) and coenzyme F430. This Methanocaldococcus jannaschii (strain ATCC 43067 / DSM 2661 / JAL-1 / JCM 10045 / NBRC 100440) (Methanococcus jannaschii) protein is Uroporphyrinogen-III C-methyltransferase (cobA).